An 80-amino-acid chain; its full sequence is Acyl carrier protein (80 aa).

In terms of domain architecture, Carrier spans alanine 4–lysine 79. Serine 39 carries the O-(pantetheine 4'-phosphoryl)serine modification.

It belongs to the acyl carrier protein (ACP) family. Post-translationally, 4'-phosphopantetheine is transferred from CoA to a specific serine of apo-ACP by AcpS. This modification is essential for activity because fatty acids are bound in thioester linkage to the sulfhydryl of the prosthetic group.

Its subcellular location is the cytoplasm. The protein operates within lipid metabolism; fatty acid biosynthesis. Functionally, carrier of the growing fatty acid chain in fatty acid biosynthesis. In Anaeromyxobacter sp. (strain Fw109-5), this protein is Acyl carrier protein.